The following is a 458-amino-acid chain: tRNA(Ile)-lysidine synthase (458 aa).

ATP is bound at residue Ser36–Ser41.

It belongs to the tRNA(Ile)-lysidine synthase family.

The protein resides in the cytoplasm. The catalysed reaction is cytidine(34) in tRNA(Ile2) + L-lysine + ATP = lysidine(34) in tRNA(Ile2) + AMP + diphosphate + H(+). In terms of biological role, ligates lysine onto the cytidine present at position 34 of the AUA codon-specific tRNA(Ile) that contains the anticodon CAU, in an ATP-dependent manner. Cytidine is converted to lysidine, thus changing the amino acid specificity of the tRNA from methionine to isoleucine. The sequence is that of tRNA(Ile)-lysidine synthase from Protochlamydia amoebophila (strain UWE25).